Consider the following 38-residue polypeptide: Photosystem II reaction center protein L (38 aa).

The chain crosses the membrane as a helical span at residues 17–37 (SLYWGLLLIFVLAVLFSNYFF).

The protein belongs to the PsbL family. In terms of assembly, PSII is composed of 1 copy each of membrane proteins PsbA, PsbB, PsbC, PsbD, PsbE, PsbF, PsbH, PsbI, PsbJ, PsbK, PsbL, PsbM, PsbT, PsbX, PsbY, PsbZ, Psb30/Ycf12, at least 3 peripheral proteins of the oxygen-evolving complex and a large number of cofactors. It forms dimeric complexes.

Its subcellular location is the plastid. It localises to the chloroplast thylakoid membrane. Its function is as follows. One of the components of the core complex of photosystem II (PSII). PSII is a light-driven water:plastoquinone oxidoreductase that uses light energy to abstract electrons from H(2)O, generating O(2) and a proton gradient subsequently used for ATP formation. It consists of a core antenna complex that captures photons, and an electron transfer chain that converts photonic excitation into a charge separation. This subunit is found at the monomer-monomer interface and is required for correct PSII assembly and/or dimerization. The polypeptide is Photosystem II reaction center protein L (Huperzia lucidula (Shining clubmoss)).